The sequence spans 471 residues: Tetratricopeptide repeat protein 29 (471 aa).

7 TPR repeats span residues 92-131 (DKLR…EAAE), 136-173 (YEEV…AQLI), 182-215 (AEAE…TQGR), 234-267 (VRTY…AREG), 274-307 (GEAS…STSL), 314-347 (GRAY…ARNN), and 354-387 (IQAC…AMEV).

It localises to the cytoplasm. The protein resides in the cytoskeleton. It is found in the flagellum axoneme. Functionally, axonemal protein which is implicated in axonemal and/or peri-axonemal structure assembly and regulates flagellum assembly and beating and therefore sperm motility. The chain is Tetratricopeptide repeat protein 29 (Ttc29) from Rattus norvegicus (Rat).